The following is a 278-amino-acid chain: Urease accessory protein UreD (278 aa).

It belongs to the UreD family. UreD, UreF and UreG form a complex that acts as a GTP-hydrolysis-dependent molecular chaperone, activating the urease apoprotein by helping to assemble the nickel containing metallocenter of UreC. The UreE protein probably delivers the nickel.

The protein resides in the cytoplasm. Its function is as follows. Required for maturation of urease via the functional incorporation of the urease nickel metallocenter. In Deinococcus radiodurans (strain ATCC 13939 / DSM 20539 / JCM 16871 / CCUG 27074 / LMG 4051 / NBRC 15346 / NCIMB 9279 / VKM B-1422 / R1), this protein is Urease accessory protein UreD.